The following is a 182-amino-acid chain: Interferon gamma 1 (182 aa).

Positions 1–21 are cleaved as a signal peptide; it reads MIAQNMTIFFWGVCLLTSGWA. N93 carries an N-linked (GlcNAc...) asparagine glycan.

It belongs to the type II (or gamma) interferon family. In terms of assembly, homodimer. Highly expressed in spleen. Also detected at lower levels in brain, gill, kidney, heart, intestine and muscle. In immune cell populations, has highest expression in peripheral blood leukocytes and splenocytes. Detected in kidney-derived monocytes, neutrophils, macrophages and leukocytes.

The protein localises to the secreted. In terms of biological role, cytokine which binds to interferon gamma receptor 1-like (ifngr1l). Has activating effects on primary macrophages and neutrophils. Induces nitric oxide production and phagocytic responses in macrophages. Primes macrophages and neutrophils for production of reactive oxygen intermediates (ROI). Stimulates phosphorylation and nuclear localization of the JAK/STAT signal transducer stat1. Promotes increased expression of a number of genes important for macrophage activity, including the interferon regulatory factors irf1, irf2, irf8 and irf9. This chain is Interferon gamma 1, found in Carassius auratus (Goldfish).